The primary structure comprises 191 residues: dTTP/UTP pyrophosphatase (191 aa).

D71 functions as the Proton acceptor in the catalytic mechanism.

The protein belongs to the Maf family. YhdE subfamily. A divalent metal cation is required as a cofactor.

The protein resides in the cytoplasm. It catalyses the reaction dTTP + H2O = dTMP + diphosphate + H(+). The enzyme catalyses UTP + H2O = UMP + diphosphate + H(+). Functionally, nucleoside triphosphate pyrophosphatase that hydrolyzes dTTP and UTP. May have a dual role in cell division arrest and in preventing the incorporation of modified nucleotides into cellular nucleic acids. The sequence is that of dTTP/UTP pyrophosphatase from Geobacter sulfurreducens (strain ATCC 51573 / DSM 12127 / PCA).